The chain runs to 85 residues: Large ribosomal subunit protein bL31 (85 aa).

The tract at residues lysine 64–lysine 85 is disordered.

It belongs to the bacterial ribosomal protein bL31 family. Type A subfamily. Part of the 50S ribosomal subunit.

Binds the 23S rRNA. The sequence is that of Large ribosomal subunit protein bL31 from Acaryochloris marina (strain MBIC 11017).